The primary structure comprises 108 residues: Insulin (108 aa).

An N-terminal signal peptide occupies residues 1–24 (MALWMHLLPLLALLALWGPEPAPA). Disulfide bonds link Cys31-Cys94, Cys43-Cys107, and Cys93-Cys98. A propeptide spans 57–85 (EAEDLQVGQVELGGGSITGSLPPLEGPMQ) (c peptide).

Belongs to the insulin family. In terms of assembly, heterodimer of a B chain and an A chain linked by two disulfide bonds.

It is found in the secreted. Insulin decreases blood glucose concentration. It increases cell permeability to monosaccharides, amino acids and fatty acids. It accelerates glycolysis, the pentose phosphate cycle, and glycogen synthesis in liver. This Aotus trivirgatus (Three-striped night monkey) protein is Insulin (INS).